The chain runs to 260 residues: Phosphatidylglycerol--prolipoprotein diacylglyceryl transferase (260 aa).

4 helical membrane passes run 17–37 (VVKWYGIMMALGVIALVSWIF), 52–72 (LTAAIIAIPSGIIFSKLLHVI), 85–105 (ILSGEGLTIFGAIIGATIGLW), and 113–133 (FNLGYLLDVAVPGILLGQAIG). Arg134 contacts a 1,2-diacyl-sn-glycero-3-phospho-(1'-sn-glycerol). The next 3 membrane-spanning stretches (helical) occupy residues 170-190 (VPTQAYEIIFLLCLFAFSLFI), 198-218 (GQLFLLYISLYAAWRVAIGFV), and 227-247 (GLEQAQVVGLILIALAVPFFI).

The protein belongs to the Lgt family.

The protein resides in the cell membrane. It catalyses the reaction L-cysteinyl-[prolipoprotein] + a 1,2-diacyl-sn-glycero-3-phospho-(1'-sn-glycerol) = an S-1,2-diacyl-sn-glyceryl-L-cysteinyl-[prolipoprotein] + sn-glycerol 1-phosphate + H(+). It functions in the pathway protein modification; lipoprotein biosynthesis (diacylglyceryl transfer). Functionally, catalyzes the transfer of the diacylglyceryl group from phosphatidylglycerol to the sulfhydryl group of the N-terminal cysteine of a prolipoprotein, the first step in the formation of mature lipoproteins. This chain is Phosphatidylglycerol--prolipoprotein diacylglyceryl transferase, found in Dehalococcoides mccartyi (strain ATCC BAA-2266 / KCTC 15142 / 195) (Dehalococcoides ethenogenes (strain 195)).